A 194-amino-acid chain; its full sequence is tRNA (mnm(5)s(2)U34)-methyltransferase (194 aa).

6 residues coordinate S-adenosyl-L-methionine: histidine 33, aspartate 34, aspartate 52, glutamine 54, serine 79, and histidine 80.

It belongs to the methyltransferase superfamily. MnmM family. As to quaternary structure, homodimer.

The enzyme catalyses 5-aminomethyl-2-thiouridine(34) in tRNA + S-adenosyl-L-methionine = 5-methylaminomethyl-2-thiouridine(34) in tRNA + S-adenosyl-L-homocysteine + H(+). It participates in tRNA modification. Involved in the biosynthesis of 5-methylaminomethyl-2-thiouridine (mnm(5)s(2)U) at the wobble position (U34) in tRNA. Catalyzes the transfer of a methyl group from S-adenosyl-L-methionine to nm(5)s(2)U34 to form mnm(5)s(2)U34. The sequence is that of tRNA (mnm(5)s(2)U34)-methyltransferase from Bacillus subtilis (strain 168).